A 182-amino-acid polypeptide reads, in one-letter code: Inner membrane-spanning protein YciB (182 aa).

5 consecutive transmembrane segments (helical) span residues 22–42 (IYIA…VTYA), 50–70 (MHLI…IFHD), 72–92 (AFIK…LAVS), 118–138 (VTWY…YVAF), and 148–168 (FKVF…VVYL).

This sequence belongs to the YciB family.

It is found in the cell inner membrane. Its function is as follows. Plays a role in cell envelope biogenesis, maintenance of cell envelope integrity and membrane homeostasis. The polypeptide is Inner membrane-spanning protein YciB (Shewanella woodyi (strain ATCC 51908 / MS32)).